The primary structure comprises 181 residues: Large ribosomal subunit protein uL5 (181 aa).

This sequence belongs to the universal ribosomal protein uL5 family. Part of the 50S ribosomal subunit; part of the 5S rRNA/L5/L18/L25 subcomplex. Contacts the 5S rRNA and the P site tRNA. Forms a bridge to the 30S subunit in the 70S ribosome.

Functionally, this is one of the proteins that bind and probably mediate the attachment of the 5S RNA into the large ribosomal subunit, where it forms part of the central protuberance. In the 70S ribosome it contacts protein S13 of the 30S subunit (bridge B1b), connecting the 2 subunits; this bridge is implicated in subunit movement. Contacts the P site tRNA; the 5S rRNA and some of its associated proteins might help stabilize positioning of ribosome-bound tRNAs. This chain is Large ribosomal subunit protein uL5, found in Helicobacter pylori (strain Shi470).